Consider the following 646-residue polypeptide: MVQKYESPVRIYKYPFELVMAAYERRFPTCPQMPIVLDCEIIDDAETDNGAKRETKRRCKLAVDAPYLFKKIIGIDVAYFIQTNFLDLKTRTLNIEAINETFSSRIEIFEKCRYYAHPENPDWTCFDQVATLDIKNFFGFEHSMEKMGMKQYSQTTQKGKEIIEYFINELKKEGISHVDRWKEDETTEPAATATTTVSISSEKPPLTRDNSILDADYIATYLGQLSPLQESKLVQFRKKIEETNHEGKVPDYQTLLRFLRARDFSIEKAASMLQESLQWREEHRIDDILGEYKTPVVVEKYFPGGWHHHDKDGRPLYILRLGNMDVKGLLKSVGEDELLKLTLHICEEGLKLMKEATKLFGKPIWNWCLLVDLDGLSMRHLWRPGVKALLRIIETVEKNYPETMGRVLIVRAPRVFPVLWTIVSAFIDENTRSKFLFFGGPDCLHIEDGLEHYIPTEKIPSFLGGSCITMIHEGGLIPKHLYKSESVEEHNGVPHGHEHHGLYKSVDLKPGQMFELVIKNTDPKSVLTWDIDVLKNDILFALYRTDKDLEQSFNDSFSSVFDNADMKEGVHYTRLEEKVRCKPKEGVQGSHEMATAGTYVLQWMCPPSCDGPAQLMYFHEILSSANYKGSMTSLQSGFSSNSLQSR.

In terms of domain architecture, PRELI/MSF1 spans 2 to 175 (VQKYESPVRI…FINELKKEGI (174 aa)). The CRAL-TRIO domain occupies 294 to 471 (TPVVVEKYFP…FLGGSCITMI (178 aa)). The GOLD domain maps to 499–646 (HHGLYKSVDL…GFSSNSLQSR (148 aa)).

The protein localises to the mitochondrion. The protein is Protein real-time of Aedes aegypti (Yellowfever mosquito).